Reading from the N-terminus, the 848-residue chain is ATP-dependent Clp protease ATP-binding subunit ClpC1 (848 aa).

A Clp R domain is found at 2-144 (FERFTDRARR…RQQVIQLLSG (143 aa)). Repeat stretches follow at residues 5-70 (FTDR…IGQG) and 80-144 (FTPR…LLSG). The tract at residues 171-418 (LDQFGRNLTA…RMRIRRMTAP (248 aa)) is i. 216–223 (GEPGVGKT) lines the ATP pocket. Positions 425–460 (DEKIAEARREKESAIDAQDFEKAASLRDREKTLVAQ) constitute a UVR domain. The segment at 479-670 (VDDEQIAEVL…VLIFTSNLGT (192 aa)) is II. 553–560 (GPSGVGKT) is an ATP binding site. Positions 821 to 848 (TGTRKPPAEPDLAKAGAHSAGGPEPAAR) are disordered.

It belongs to the ClpA/ClpB family. ClpC subfamily.

Its function is as follows. ATP-dependent specificity component of the Clp protease. It directs the protease to specific substrates. Can perform chaperone functions in the absence of ClpP. Degrades anti-sigma-E factor RseA in the presence of ClpP2. The polypeptide is ATP-dependent Clp protease ATP-binding subunit ClpC1 (clpC1) (Mycobacterium tuberculosis (strain ATCC 25618 / H37Rv)).